We begin with the raw amino-acid sequence, 107 residues long: U20-lycotoxin-Ls1b (107 aa).

Positions 1–30 are cleaved as a signal peptide; the sequence is MFSTSDQVSKMNSRILSALLILGIATCVIA. The region spanning 31–76 is the WAP domain; it reads GGFCPKSRHPQCNLSYKINDCCAQSDCRVGSVCCVEGCGNVCRAES. 5 cysteine pairs are disulfide-bonded: C34–C64, C42–C68, C51–C63, C52–C90, and C57–C72.

This sequence belongs to the venom protein 11 family. 02 (wap-2) subfamily. In terms of processing, contains 5 disulfide bonds. In terms of tissue distribution, expressed by the venom gland.

Its subcellular location is the secreted. Has antibacterial activity. The polypeptide is U20-lycotoxin-Ls1b (Lycosa singoriensis (Wolf spider)).